The chain runs to 631 residues: MEVHKVVAPPHKSTVAKLKTKLKETFFPDDPLRQFRGQPNRTKLIRAAQYIFPILQWCPEYSFSLLKSDVVSGLTIASLAIPQGISYAKLANLPPIVGLYSSFVPPLVYAVLGSSRDLAVGPVSIASLILGSMLRQQVSPVDDPVLFLQLAFSSTFFAGLFQASLGILRLGFIIDFLSKATLIGFMGGAAIIVSLQQLKGLLGITHFTKHMSVVPVLSSVFQHTNEWSWQTIVMGVCFLLFLLSTRHLSMKKPKLFWVSAGAPLLSVIVSTLLVFVFRAERHGISVIGKLPEGLNPPSWNMLQFHGSHLALVAKTGLVTGIVSLTEGIAVGRTFAALKNYHVDGNKEMIAIGLMNVVGSATSCYVTTGAFSRSAVNNNAGAKTAVSNIVMSVTVMVTLLFLMPLFEYTPNVVLGAIIVTAVIGLIDLPAACHIWKIDKFDFLVMLCAFFGVIFLSVQNGLAIAVGLSLFKILMQVTRPKMVIMGNIPGTDIYRDLHHYKEAQRIPGFLVLSIESPVNFANSNYLTERTSRWIEECEEEEAQEKHSSLQFLILEMSAVSGVDTNGVSFFKELKKTTAKKDIELVFVNPLSEVVEKLQRADEQKEFMRPEFLFLTVAEAVASLSLKGPSLSNV.

Residues 1-69 (MEVHKVVAPP…EYSFSLLKSD (69 aa)) lie on the Cytoplasmic side of the membrane. Residues 70-90 (VVSGLTIASLAIPQGISYAKL) form a helical membrane-spanning segment. Residues 91 to 92 (AN) are Extracellular-facing. A helical transmembrane segment spans residues 93–113 (LPPIVGLYSSFVPPLVYAVLG). Residues 114-117 (SSRD) are Cytoplasmic-facing. A helical membrane pass occupies residues 118 to 138 (LAVGPVSIASLILGSMLRQQV). Over 139 to 144 (SPVDDP) the chain is Extracellular. Residues 145–165 (VLFLQLAFSSTFFAGLFQASL) traverse the membrane as a helical segment. Residues 166–171 (GILRLG) are Cytoplasmic-facing. The chain crosses the membrane as a helical span at residues 172–192 (FIIDFLSKATLIGFMGGAAII). The Extracellular segment spans residues 193-223 (VSLQQLKGLLGITHFTKHMSVVPVLSSVFQH). Residues 224–244 (TNEWSWQTIVMGVCFLLFLLS) form a helical membrane-spanning segment. Residues 245–256 (TRHLSMKKPKLF) lie on the Cytoplasmic side of the membrane. Residues 257–277 (WVSAGAPLLSVIVSTLLVFVF) traverse the membrane as a helical segment. At 278–309 (RAERHGISVIGKLPEGLNPPSWNMLQFHGSHL) the chain is on the extracellular side. The chain crosses the membrane as a helical span at residues 310 to 330 (ALVAKTGLVTGIVSLTEGIAV). Over 331-347 (GRTFAALKNYHVDGNKE) the chain is Cytoplasmic. A helical membrane pass occupies residues 348–368 (MIAIGLMNVVGSATSCYVTTG). The Extracellular segment spans residues 369 to 384 (AFSRSAVNNNAGAKTA). The chain crosses the membrane as a helical span at residues 385–405 (VSNIVMSVTVMVTLLFLMPLF). Residues 406 to 410 (EYTPN) lie on the Cytoplasmic side of the membrane. Residues 411-431 (VVLGAIIVTAVIGLIDLPAAC) form a helical membrane-spanning segment. At 432 to 441 (HIWKIDKFDF) the chain is on the extracellular side. The helical transmembrane segment at 442-462 (LVMLCAFFGVIFLSVQNGLAI) threads the bilayer. The Cytoplasmic portion of the chain corresponds to 463 to 631 (AVGLSLFKIL…SLKGPSLSNV (169 aa)). In terms of domain architecture, STAS spans 497-621 (HYKEAQRIPG…LTVAEAVASL (125 aa)).

This sequence belongs to the SLC26A/SulP transporter (TC 2.A.53) family. Expressed only in leaves.

It localises to the membrane. Its function is as follows. H(+)/sulfate cotransporter that may play a role in the regulation of sulfate assimilation. In Arabidopsis thaliana (Mouse-ear cress), this protein is Probable sulfate transporter 3.3 (SULTR3;3).